Reading from the N-terminus, the 64-residue chain is Large ribosomal subunit protein bL35 (64 aa).

Basic residues-rich tracts occupy residues 1 to 15 (MPKA…KRFR) and 23 to 42 (VRQK…KRTR). The interval 1 to 45 (MPKAKTHSGASKRFRTTGSGKVVRQKANRRHLLEHKPTKRTRRLD) is disordered.

It belongs to the bacterial ribosomal protein bL35 family.

This Mycolicibacterium vanbaalenii (strain DSM 7251 / JCM 13017 / BCRC 16820 / KCTC 9966 / NRRL B-24157 / PYR-1) (Mycobacterium vanbaalenii) protein is Large ribosomal subunit protein bL35.